Consider the following 364-residue polypeptide: Protein Bop (364 aa).

Residues 66–88 (STASGTCGGKPAERGPLAGHMPS) form a disordered region. The BH3 signature appears at 114-128 (LDRFLAQLGDYMSFH). The tract at residues 258–364 (QLTKESTPGP…PGEPPLSPGF (107 aa)) is disordered. 2 stretches are compositionally biased toward pro residues: residues 311–322 (AQRPDPAHPGGP) and 355–364 (PGEPPLSPGF).

Interacts (via BH3 domain) with VDAC1. Interacts with pro-survival Bcl-2 family members, BCL2, BCL2L1 isoform Bcl-X(L), MCL1, BCL2A1 and BCL2L2. Interacts with BAX and BAK1. As to expression, ubiquitously expressed.

It localises to the mitochondrion. Could induce apoptosis in a BH3 domain-dependent manner. The direct interaction network of Bcl-2 family members may play a key role in modulation RTL10/BOP intrinsic apoptotic signaling activity. The chain is Protein Bop from Homo sapiens (Human).